The following is a 556-amino-acid chain: CTP synthase (556 aa).

The segment at 1–266 (MKYIFVTGGV…GKVVEDLLGL (266 aa)) is amidoligase domain. CTP is bound at residue Ser12. Ser12 serves as a coordination point for UTP. 13 to 18 (SLGKGV) contributes to the ATP binding site. Residue Tyr53 participates in L-glutamine binding. Asp70 contributes to the ATP binding site. 2 residues coordinate Mg(2+): Asp70 and Glu140. Residues 147 to 149 (DIE), 187 to 192 (KTKPTQ), and Lys223 each bind CTP. UTP is bound by residues 187–192 (KTKPTQ) and Lys223. Residues 291-544 (TIAIAGKYTE…VKAALRGQSS (254 aa)) enclose the Glutamine amidotransferase type-1 domain. Gly356 is an L-glutamine binding site. The active-site Nucleophile; for glutamine hydrolysis is the Cys383. L-glutamine-binding positions include 384–387 (LGMQ), Glu407, and Arg467. Residues His517 and Glu519 contribute to the active site.

Belongs to the CTP synthase family. In terms of assembly, homotetramer.

The catalysed reaction is UTP + L-glutamine + ATP + H2O = CTP + L-glutamate + ADP + phosphate + 2 H(+). It catalyses the reaction L-glutamine + H2O = L-glutamate + NH4(+). The enzyme catalyses UTP + NH4(+) + ATP = CTP + ADP + phosphate + 2 H(+). The protein operates within pyrimidine metabolism; CTP biosynthesis via de novo pathway; CTP from UDP: step 2/2. Its activity is regulated as follows. Allosterically activated by GTP, when glutamine is the substrate; GTP has no effect on the reaction when ammonia is the substrate. The allosteric effector GTP functions by stabilizing the protein conformation that binds the tetrahedral intermediate(s) formed during glutamine hydrolysis. Inhibited by the product CTP, via allosteric rather than competitive inhibition. Functionally, catalyzes the ATP-dependent amination of UTP to CTP with either L-glutamine or ammonia as the source of nitrogen. Regulates intracellular CTP levels through interactions with the four ribonucleotide triphosphates. The protein is CTP synthase of Deinococcus deserti (strain DSM 17065 / CIP 109153 / LMG 22923 / VCD115).